Reading from the N-terminus, the 226-residue chain is Hand transcription factor 1 (226 aa).

A compositionally biased stretch (polar residues) spans 1–15 (MVKSTTAGNNAVSSL). Residues 1–35 (MVKSTTAGNNAVSSLESTDSKKSRKEKSREKEHRR) are disordered. A basic motif region spans residues 23 to 36 (SRKEKSREKEHRRA). The region spanning 23–77 (SRKEKSREKEHRRAQCINSAFEILQQHIPYLKSEERKSLPKIKTLRLAMQYIDHL) is the bHLH domain. The helix-loop-helix motif stretch occupies residues 37–77 (QCINSAFEILQQHIPYLKSEERKSLPKIKTLRLAMQYIDHL).

The protein resides in the nucleus. Probable transcription factor which regulates early embryonic myogenesis, in cooperation with transcription factors unc-120 and hlh-1. Involved in controlling the number and position of somatic gonadal precursor cells (SGPs) in the gonadal primordium, and embryonic body shape. This Caenorhabditis elegans protein is Hand transcription factor 1.